The following is a 198-amino-acid chain: MIAIIDYGLGNVKNVQRAVQYLGYDAILTDKYNEIANADVVILPGVGHFKDAMQAINERGLANIITSITDKPVIGICLGMQLFYRWSAEGDVEGLNIFPGNIIPIQSPYPVPHLGWNNLISKHPLLLHDVYFVHAYQAEMSQHVVAYTEYGTKIPAIVQYQNYIGIQFHPEKSGDDGLAILNQALKGGFQDDQTMASN.

Positions 1–194 (MIAIIDYGLG…LKGGFQDDQT (194 aa)) constitute a Glutamine amidotransferase type-1 domain. C77 (nucleophile) is an active-site residue. Catalysis depends on residues H169 and E171.

Heterodimer of HisH and HisF.

It localises to the cytoplasm. The enzyme catalyses 5-[(5-phospho-1-deoxy-D-ribulos-1-ylimino)methylamino]-1-(5-phospho-beta-D-ribosyl)imidazole-4-carboxamide + L-glutamine = D-erythro-1-(imidazol-4-yl)glycerol 3-phosphate + 5-amino-1-(5-phospho-beta-D-ribosyl)imidazole-4-carboxamide + L-glutamate + H(+). It carries out the reaction L-glutamine + H2O = L-glutamate + NH4(+). It functions in the pathway amino-acid biosynthesis; L-histidine biosynthesis; L-histidine from 5-phospho-alpha-D-ribose 1-diphosphate: step 5/9. Functionally, IGPS catalyzes the conversion of PRFAR and glutamine to IGP, AICAR and glutamate. The HisH subunit catalyzes the hydrolysis of glutamine to glutamate and ammonia as part of the synthesis of IGP and AICAR. The resulting ammonia molecule is channeled to the active site of HisF. This chain is Imidazole glycerol phosphate synthase subunit HisH, found in Staphylococcus saprophyticus subsp. saprophyticus (strain ATCC 15305 / DSM 20229 / NCIMB 8711 / NCTC 7292 / S-41).